The sequence spans 109 residues: Large ribosomal subunit protein uL22 (109 aa).

Belongs to the universal ribosomal protein uL22 family. In terms of assembly, part of the 50S ribosomal subunit.

Functionally, this protein binds specifically to 23S rRNA; its binding is stimulated by other ribosomal proteins, e.g. L4, L17, and L20. It is important during the early stages of 50S assembly. It makes multiple contacts with different domains of the 23S rRNA in the assembled 50S subunit and ribosome. In terms of biological role, the globular domain of the protein is located near the polypeptide exit tunnel on the outside of the subunit, while an extended beta-hairpin is found that lines the wall of the exit tunnel in the center of the 70S ribosome. This chain is Large ribosomal subunit protein uL22, found in Dehalococcoides mccartyi (strain ATCC BAA-2266 / KCTC 15142 / 195) (Dehalococcoides ethenogenes (strain 195)).